The chain runs to 197 residues: ATP-dependent Clp protease proteolytic subunit (197 aa).

S102 acts as the Nucleophile in catalysis. Residue H127 is part of the active site.

This sequence belongs to the peptidase S14 family. In terms of assembly, fourteen ClpP subunits assemble into 2 heptameric rings which stack back to back to give a disk-like structure with a central cavity, resembling the structure of eukaryotic proteasomes.

The protein resides in the cytoplasm. The enzyme catalyses Hydrolysis of proteins to small peptides in the presence of ATP and magnesium. alpha-casein is the usual test substrate. In the absence of ATP, only oligopeptides shorter than five residues are hydrolyzed (such as succinyl-Leu-Tyr-|-NHMec, and Leu-Tyr-Leu-|-Tyr-Trp, in which cleavage of the -Tyr-|-Leu- and -Tyr-|-Trp bonds also occurs).. Cleaves peptides in various proteins in a process that requires ATP hydrolysis. Has a chymotrypsin-like activity. Plays a major role in the degradation of misfolded proteins. The protein is ATP-dependent Clp protease proteolytic subunit of Buchnera aphidicola subsp. Schizaphis graminum (strain Sg).